Here is a 265-residue protein sequence, read N- to C-terminus: MALTKIFLILLLSLLGLYSETVKSQNCDCAPNLCCSQFGYCGTTADYCGSTCQSGPCRVGGPPTGAGLVGNIVTQIFFNNIINQAGNGCAGKSFYTRDSFINATNTFPSFANTVTRREIATMFAHFTYETGHFCYIEEINGASRVMCDQNNRQYPCAPAKSYHGRGPLLLSWNFNYGACGQSLGLDLLRQPELVSSNPVVAFRTALWFWMKSVRPVLNQGFGATIRAISGFDCDGRNLGGVNARIGYYRDYCGQLGLDPGANITC.

The first 24 residues, 1–24 (MALTKIFLILLLSLLGLYSETVKS), serve as a signal peptide directing secretion. The Chitin-binding type-1 domain occupies 25–59 (QNCDCAPNLCCSQFGYCGTTADYCGSTCQSGPCRV). Disulfide bonds link cysteine 27/cysteine 35, cysteine 29/cysteine 41, cysteine 34/cysteine 48, and cysteine 52/cysteine 57. The tract at residues 67–265 (GLVGNIVTQI…GLDPGANITC (199 aa)) is catalytic. Residue asparagine 102 is glycosylated (N-linked (GlcNAc...) asparagine). Catalysis depends on glutamate 129, which acts as the Proton donor. Residue asparagine 262 is glycosylated (N-linked (GlcNAc...) asparagine).

Belongs to the glycosyl hydrolase 19 family. Chitinase class I subfamily.

It catalyses the reaction Random endo-hydrolysis of N-acetyl-beta-D-glucosaminide (1-&gt;4)-beta-linkages in chitin and chitodextrins.. The polypeptide is Endochitinase At2g43580 (Arabidopsis thaliana (Mouse-ear cress)).